A 616-amino-acid chain; its full sequence is Chaperone protein HtpG (616 aa).

The tract at residues 1 to 333 (MKKQFDTEVN…CQDLPLNVSR (333 aa)) is a; substrate-binding. The b stretch occupies residues 334 to 542 (EILQQNKILS…SNDPTYQMQK (209 aa)). The c stretch occupies residues 543-616 (IMLSMGQEVK…INEFLEKELL (74 aa)).

This sequence belongs to the heat shock protein 90 family. Homodimer.

Its subcellular location is the cytoplasm. Functionally, molecular chaperone. Has ATPase activity. The polypeptide is Chaperone protein HtpG (Borrelia garinii subsp. bavariensis (strain ATCC BAA-2496 / DSM 23469 / PBi) (Borreliella bavariensis)).